The chain runs to 570 residues: Sulfite reductase [NADPH] hemoprotein beta-component (570 aa).

Residues cysteine 434, cysteine 440, cysteine 479, and cysteine 483 each contribute to the [4Fe-4S] cluster site. Cysteine 483 contributes to the siroheme binding site.

This sequence belongs to the nitrite and sulfite reductase 4Fe-4S domain family. In terms of assembly, alpha(8)-beta(8). The alpha component is a flavoprotein, the beta component is a hemoprotein. Siroheme serves as cofactor. It depends on [4Fe-4S] cluster as a cofactor.

The enzyme catalyses hydrogen sulfide + 3 NADP(+) + 3 H2O = sulfite + 3 NADPH + 4 H(+). Its pathway is sulfur metabolism; hydrogen sulfide biosynthesis; hydrogen sulfide from sulfite (NADPH route): step 1/1. In terms of biological role, component of the sulfite reductase complex that catalyzes the 6-electron reduction of sulfite to sulfide. This is one of several activities required for the biosynthesis of L-cysteine from sulfate. This Salmonella schwarzengrund (strain CVM19633) protein is Sulfite reductase [NADPH] hemoprotein beta-component.